A 171-amino-acid polypeptide reads, in one-letter code: Terminase, small subunit (171 aa).

This sequence belongs to the P23virus small terminase family. Homononamer; forms a ring-like structure through which genomic DNA is translocated into the capsid. Heterodimer with the terminase large subunit; the active complex is probably heterooligomeric.

In terms of biological role, the terminase small subunit binds to the packaging initiation site and regulates the ATPase activity of the terminase large subunit. The terminase lies at a unique vertex of the procapsid and is composed of two subunits, a small terminase subunit involved in viral DNA recognition (packaging sequence), and a large terminase subunit. Both terminase subunits heterooligomerize and are docked on the portal protein to form the packaging machine. This Thermus phage G20c (Thermus thermophilus phage G20c) protein is Terminase, small subunit.